Here is a 272-residue protein sequence, read N- to C-terminus: Potassium channel regulatory protein (272 aa).

A BTB domain is found at 5 to 106 (ELVTLNVGGK…LLNPYLLQPR (102 aa)).

As to quaternary structure, can form homooligomers. Interacts with KCNA1 (via cytoplasmic N-terminal domain) and KCNA4. As to expression, ubiquitous in normal tissues and expressed in some tumor tissues.

It localises to the endoplasmic reticulum. Inhibits potassium fluxes in cells. May regulate Kv1 family channel proteins by retaining a fraction of channels in endomembranes. This is Potassium channel regulatory protein (KCNRG) from Homo sapiens (Human).